A 787-amino-acid polypeptide reads, in one-letter code: Putative pentatricopeptide repeat-containing protein At1g69350, mitochondrial (787 aa).

The transit peptide at 1 to 16 (MTQYMPLFRSCSSLRL) directs the protein to the mitochondrion. PPR repeat units follow at residues 33-63 (DPLP…FPYP), 64-98 (DSFM…TTQI), 99-134 (SKFV…GVDD), 135-165 (DAVI…MPVR), 166-200 (DLVA…GVEP), 201-235 (DAVT…MFDL), 236-266 (DETL…IAKK), 267-301 (NAVS…GIEP), 302-336 (NLVT…ELDP), 338-368 (YESL…VSDR), 369-403 (NIVA…RIKP), 404-434 (DAFT…VIRT), 438-468 (DEFV…IKHR), 469-503 (SVVT…YLEM), 504-534 (NEVT…LIIS), 538-568 (DLFT…MSSR), 569-603 (SIVS…GTKP), 604-638 (NEVV…GVSP), and 639-669 (NSEH…MPFL). Residues 674-749 (VWGSLVNGCR…VPGYSAIEID (76 aa)) are type E motif. The type E(+) motif stretch occupies residues 750–780 (QKVFRFGAGEENRIQTDEIYRFLGNLQNLTN).

The protein belongs to the PPR family. PCMP-E subfamily.

It is found in the mitochondrion. This chain is Putative pentatricopeptide repeat-containing protein At1g69350, mitochondrial (PCMP-E66), found in Arabidopsis thaliana (Mouse-ear cress).